The primary structure comprises 159 residues: ATP synthase subunit b (159 aa).

A helical membrane pass occupies residues 2-22 (NISIPQIIAAILNFIILLLIV).

The protein belongs to the ATPase B chain family. In terms of assembly, F-type ATPases have 2 components, F(1) - the catalytic core - and F(0) - the membrane proton channel. F(1) has five subunits: alpha(3), beta(3), gamma(1), delta(1), epsilon(1). F(0) has three main subunits: a(1), b(2) and c(10-14). The alpha and beta chains form an alternating ring which encloses part of the gamma chain. F(1) is attached to F(0) by a central stalk formed by the gamma and epsilon chains, while a peripheral stalk is formed by the delta and b chains.

The protein resides in the cell membrane. F(1)F(0) ATP synthase produces ATP from ADP in the presence of a proton or sodium gradient. F-type ATPases consist of two structural domains, F(1) containing the extramembraneous catalytic core and F(0) containing the membrane proton channel, linked together by a central stalk and a peripheral stalk. During catalysis, ATP synthesis in the catalytic domain of F(1) is coupled via a rotary mechanism of the central stalk subunits to proton translocation. Functionally, component of the F(0) channel, it forms part of the peripheral stalk, linking F(1) to F(0). The polypeptide is ATP synthase subunit b (Clostridium botulinum (strain Okra / Type B1)).